The chain runs to 101 residues: Small ribosomal subunit protein uS14 (101 aa).

Belongs to the universal ribosomal protein uS14 family. In terms of assembly, part of the 30S ribosomal subunit. Contacts proteins S3 and S10.

Binds 16S rRNA, required for the assembly of 30S particles and may also be responsible for determining the conformation of the 16S rRNA at the A site. This is Small ribosomal subunit protein uS14 from Chlamydia abortus (strain DSM 27085 / S26/3) (Chlamydophila abortus).